We begin with the raw amino-acid sequence, 335 residues long: Flagellar P-ring protein (335 aa).

The N-terminal stretch at 1–17 (MNKPMLMLITFATSLLA) is a signal peptide.

Belongs to the FlgI family. In terms of assembly, the basal body constitutes a major portion of the flagellar organelle and consists of four rings (L,P,S, and M) mounted on a central rod.

It is found in the periplasm. It localises to the bacterial flagellum basal body. Assembles around the rod to form the L-ring and probably protects the motor/basal body from shearing forces during rotation. The protein is Flagellar P-ring protein of Borreliella burgdorferi (strain ZS7) (Borrelia burgdorferi).